We begin with the raw amino-acid sequence, 64 residues long: Large ribosomal subunit protein bL35 (64 aa).

Composition is skewed to basic residues over residues 1 to 15 (MPKN…KRFK) and 27 to 42 (AGKR…KKTR). The interval 1 to 45 (MPKNKTHSGASKRFKITGSGKVLRERAGKRHLLEHKSSKKTRSLT) is disordered.

This sequence belongs to the bacterial ribosomal protein bL35 family.

This is Large ribosomal subunit protein bL35 from Streptomyces griseus subsp. griseus (strain JCM 4626 / CBS 651.72 / NBRC 13350 / KCC S-0626 / ISP 5235).